The sequence spans 1082 residues: uncharacterized protein (1082 aa).

The PNPLA domain occupies 50-319; sequence TTMTGGVSLA…LDNRPIGVLF (270 aa). A GXSXG motif is present at residues 120 to 124; that stretch reads GTSAG. Residue Ser122 is the Nucleophile of the active site. The Proton acceptor role is filled by Asp306. The short motif at 306–308 is the DGA/G element; the sequence is DGG. The next 4 helical transmembrane spans lie at 959–979, 982–1002, 1012–1032, and 1057–1077; these read IARS…AAAI, VTVF…LVVL, LFAL…TPVV, and WWHP…IAAA.

The protein resides in the cell membrane. This is an uncharacterized protein from Mycobacterium tuberculosis (strain ATCC 25618 / H37Rv).